We begin with the raw amino-acid sequence, 146 residues long: Microsomal glutathione S-transferase 2 (146 aa).

3 helical membrane-spanning segments follow: residues 6-26 (ILLAALSVLSACQQSYFAMQV), 59-79 (FYPIFIITLWMAGWYFNQVFA), and 111-131 (SLGVLALLTVLGAVGILNSFL).

Belongs to the MAPEG family. In terms of assembly, homotrimer.

Its subcellular location is the endoplasmic reticulum membrane. The protein resides in the microsome membrane. It catalyses the reaction RX + glutathione = an S-substituted glutathione + a halide anion + H(+). The enzyme catalyses 1-chloro-2,4-dinitrobenzene + glutathione = 2,4-dinitrophenyl-S-glutathione + chloride + H(+). The catalysed reaction is leukotriene C4 = leukotriene A4 + glutathione. It carries out the reaction (5S)-hydroperoxy-(6E,8Z,11Z,14Z)-eicosatetraenoate + 2 glutathione = (5S)-hydroxy-(6E,8Z,11Z,14Z)-eicosatetraenoate + glutathione disulfide + H2O. With respect to regulation, each monomer binds on GSH molecule but only one subunit is catalytically active. In terms of biological role, catalyzes several different glutathione-dependent reactions. Catalyzes the glutathione-dependent reduction of lipid hydroperoxides, such as 5-HPETE. Has glutathione transferase activity, toward xenobiotic electrophiles, such as 1-chloro-2, 4-dinitrobenzene (CDNB). Also catalyzes the conjugation of leukotriene A4 with reduced glutathione to form leukotriene C4 (LTC4). Involved in oxidative DNA damage induced by ER stress and anticancer agents by activating LTC4 biosynthetic machinery in nonimmune cells. This Bos taurus (Bovine) protein is Microsomal glutathione S-transferase 2 (MGST2).